The primary structure comprises 986 residues: Ubiquitin carboxyl-terminal hydrolase 37 (986 aa).

The KEN box 1 signature appears at 32-34 (KDN). Short sequence motifs (D-box) lie at residues 71–79 (CLMLTLKDT) and 96–105 (RMYLDAVHQD). 2 disordered regions span residues 134 to 238 (NRQF…MSDP) and 251 to 305 (LKLK…KRSL). Over residues 149-159 (VTVESKDETPF) the composition is skewed to basic and acidic residues. The D-box 3 motif lies at 160–168 (RKVLGTPAR). Residues 171–195 (VKNSSGTGAPSNRVNVAASPTSSVP) show a composition bias toward polar residues. A KEN box 2 motif is present at residues 224–226 (KEN). A compositionally biased stretch (basic and acidic residues) spans 251-260 (LKLKQEEENR). A compositionally biased stretch (low complexity) spans 269-298 (SSSYYGSRSSSKEYSTSSSTLDRSSVSSQT). The 615-residue stretch at 344–958 (QGFSNLGNTC…SGYIFFYMHK (615 aa)) folds into the USP domain. The Nucleophile role is filled by C353. Disordered regions lie at residues 683–710 (VQRG…GFDG) and 729–751 (SLSL…GDDE). The 20-residue stretch at 712–731 (SEDELLAAVLEISKREASLS) folds into the UIM 1 domain. The span at 729–739 (SLSLSHDEDKP) shows a compositional bias: basic and acidic residues. The KEN box 3 motif lies at 789 to 791 (KEN). Positions 811-840 (REREEQELQQALAQSLQEQEAREQKEDDDL) are disordered. UIM domains are found at residues 813–832 (REEQ…QEAR) and 835–854 (KEDD…FNSS). Residues 818–828 (LQQALAQSLQE) are compositionally biased toward low complexity. Positions 829–840 (QEAREQKEDDDL) are enriched in basic and acidic residues. Catalysis depends on H913, which acts as the Proton acceptor.

Belongs to the peptidase C19 family.

It carries out the reaction Thiol-dependent hydrolysis of ester, thioester, amide, peptide and isopeptide bonds formed by the C-terminal Gly of ubiquitin (a 76-residue protein attached to proteins as an intracellular targeting signal).. Functionally, deubiquitinase that antagonizes the anaphase-promoting complex (APC/C) during G1/S transition by mediating deubiquitination of APC/C target proteins, thereby promoting S phase entry. Specifically mediates deubiquitination of 'Lys-11'-linked polyubiquitin chains, a specific ubiquitin-linkage type mediated by the APC/C complex. The sequence is that of Ubiquitin carboxyl-terminal hydrolase 37 (USP37) from Gallus gallus (Chicken).